Consider the following 327-residue polypeptide: Thioredoxin reductase sirT (327 aa).

FAD-binding positions include 15-18 (AGPA), 37-42 (DTGVFR), histidine 50, and alanine 115. Cysteines 139 and 142 form a disulfide. FAD is bound by residues aspartate 289 and 296 to 297 (QV).

It belongs to the class-II pyridine nucleotide-disulfide oxidoreductase family. In terms of assembly, homodimer. FAD is required as a cofactor.

Its pathway is mycotoxin biosynthesis. Thioredoxin reductase; part of the gene cluster that mediates the biosynthesis of sirodesmin PL, an epipolythiodioxopiperazine (ETP) characterized by a disulfide bridged cyclic dipeptide and that acts as a phytotoxin which is involved in the blackleg didease of canola. SirD catalyzes the O-prenylation of L-tyrosine (L-Tyr) in the presence of dimethylallyl diphosphate (DMAPP) to yield 4-O-dimethylallyl-L-Tyr, and therefore represents probably the first pathway-specific enzyme in the biosynthesis of sirodesmin PL. 4-O-dimethylallyl-L-Tyr, then undergoes condensation with L-Ser in a reaction catalyzed by the non-ribosomal peptide synthase sirP to form the diketopiperazine (DKP) backbone. Further bishydroxylation of the DKP performed by the cytochrome P450 monooxygenase sirC leads to the production of the intermediate phomamide. This step is essential to form the reactive thiol group required for toxicity of sirodesmin PL. The next steps of sirodesmin biosynthesis are not well understood yet, but some predictions could be made from intermediate compounds identification. Phomamide is converted into phomalizarine via oxidation, probably by sirT. Further oxidation, methylation (by sirM or sirN) and reduction steps convert phomalizarine to deacetyl sirodesmin. Finally, acetyltransferase sirH probably acetylates deacetyl sirodesmin to produce sirodesmin PL. In Leptosphaeria maculans (Blackleg fungus), this protein is Thioredoxin reductase sirT.